The sequence spans 108 residues: Nucleoid-associated protein mma_2329 (108 aa).

This sequence belongs to the YbaB/EbfC family. As to quaternary structure, homodimer.

The protein resides in the cytoplasm. It is found in the nucleoid. Binds to DNA and alters its conformation. May be involved in regulation of gene expression, nucleoid organization and DNA protection. This chain is Nucleoid-associated protein mma_2329, found in Janthinobacterium sp. (strain Marseille) (Minibacterium massiliensis).